The sequence spans 299 residues: 4-diphosphocytidyl-2-C-methyl-D-erythritol kinase (299 aa).

Residue Lys10 is part of the active site. 96–106 serves as a coordination point for ATP; sequence PVAGGMAGGSA. Residue Asp138 is part of the active site.

Belongs to the GHMP kinase family. IspE subfamily.

The enzyme catalyses 4-CDP-2-C-methyl-D-erythritol + ATP = 4-CDP-2-C-methyl-D-erythritol 2-phosphate + ADP + H(+). It functions in the pathway isoprenoid biosynthesis; isopentenyl diphosphate biosynthesis via DXP pathway; isopentenyl diphosphate from 1-deoxy-D-xylulose 5-phosphate: step 3/6. Functionally, catalyzes the phosphorylation of the position 2 hydroxy group of 4-diphosphocytidyl-2C-methyl-D-erythritol. The chain is 4-diphosphocytidyl-2-C-methyl-D-erythritol kinase from Streptomyces coelicolor (strain ATCC BAA-471 / A3(2) / M145).